Consider the following 480-residue polypeptide: MNYFPIFANLAGRPVLVVGGGSVAARKISLLLDAGAQVRVVANQLNAELSALAAENKILWLAEEFRAEHIRTVFLIIAASSDQALNRRVFQLAESCQKPVNVVDDRDYCSFIFPSIINRNPIQIAVSSSGSAPVLARLLREKLEALLPHSLGDMAEISGRWRDAVKAKLKSVTERRRFWEKQFNGRFAALVKNQQTAQAEQELAKQLEQNYQGGFVSLVGAGPGDAGLLTLKGLQEIQQADVVLYDALVSDGILSLVRRDAERIFVGKRARGDRTPQEDTNALMVRLAREGRRVVRLKGGDPFVFGRGGEELETLARHQIPFSVVPGITAAVGATAYAGIPLTHRDYAQSAVFVTGHRKADAPDIEWQTLARSRQTLVIYMGALKAALIAERLQQHGRSPDTPAAVISQGTLPAQKTATGTLANLAELAETAPNPALIVIGEVVGLHEKLAWFGENGEGENRVGQAYPALGGLNAGQRAA.

The segment at 1 to 203 is precorrin-2 dehydrogenase /sirohydrochlorin ferrochelatase; it reads MNYFPIFANL…QQTAQAEQEL (203 aa). Residues 22–23 and 43–44 contribute to the NAD(+) site; these read SV and NQ. A Phosphoserine modification is found at S128. A uroporphyrinogen-III C-methyltransferase region spans residues 214–480; sequence GFVSLVGAGP…GGLNAGQRAA (267 aa). P223 contributes to the S-adenosyl-L-methionine binding site. Residue D246 is the Proton acceptor of the active site. Residue K268 is the Proton donor of the active site. Residues 299–301, V304, 329–330, M381, and G410 each bind S-adenosyl-L-methionine; these read GGD and TA.

This sequence in the N-terminal section; belongs to the precorrin-2 dehydrogenase / sirohydrochlorin ferrochelatase family. The protein in the C-terminal section; belongs to the precorrin methyltransferase family.

The enzyme catalyses uroporphyrinogen III + 2 S-adenosyl-L-methionine = precorrin-2 + 2 S-adenosyl-L-homocysteine + H(+). It carries out the reaction precorrin-2 + NAD(+) = sirohydrochlorin + NADH + 2 H(+). The catalysed reaction is siroheme + 2 H(+) = sirohydrochlorin + Fe(2+). It functions in the pathway cofactor biosynthesis; adenosylcobalamin biosynthesis; precorrin-2 from uroporphyrinogen III: step 1/1. It participates in cofactor biosynthesis; adenosylcobalamin biosynthesis; sirohydrochlorin from precorrin-2: step 1/1. Its pathway is porphyrin-containing compound metabolism; siroheme biosynthesis; precorrin-2 from uroporphyrinogen III: step 1/1. The protein operates within porphyrin-containing compound metabolism; siroheme biosynthesis; siroheme from sirohydrochlorin: step 1/1. It functions in the pathway porphyrin-containing compound metabolism; siroheme biosynthesis; sirohydrochlorin from precorrin-2: step 1/1. In terms of biological role, multifunctional enzyme that catalyzes the SAM-dependent methylations of uroporphyrinogen III at position C-2 and C-7 to form precorrin-2 via precorrin-1. Then it catalyzes the NAD-dependent ring dehydrogenation of precorrin-2 to yield sirohydrochlorin. Finally, it catalyzes the ferrochelation of sirohydrochlorin to yield siroheme. In Neisseria meningitidis serogroup C (strain 053442), this protein is Siroheme synthase.